The sequence spans 202 residues: UPF0301 protein BCG_0069 (202 aa).

The protein belongs to the UPF0301 (AlgH) family.

This is UPF0301 protein BCG_0069 from Mycobacterium bovis (strain BCG / Pasteur 1173P2).